The primary structure comprises 362 residues: Prostaglandin F2-alpha receptor (362 aa).

At 1–31 the chain is on the extracellular side; it reads MSTNSSIQPVSPESELLSNTTCQLEEDLSIS. 2 N-linked (GlcNAc...) asparagine glycosylation sites follow: N4 and N19. Residues 32 to 54 traverse the membrane as a helical segment; it reads FSIIFMTVGILSNSLAIAILMKA. Residues 55–69 lie on the Cytoplasmic side of the membrane; sequence YQRFRQKYKSSFLLL. The helical transmembrane segment at 70–90 threads the bilayer; that stretch reads ASALVITDFFGHLINGTIAVF. Residues 91 to 109 are Extracellular-facing; sequence VYASDKDWIYFDKSNILCS. A disulfide bridge connects residues C108 and C186. A helical membrane pass occupies residues 110 to 131; the sequence is IFGICMVFSGLCPLFLGSLMAI. The Cytoplasmic portion of the chain corresponds to 132 to 152; the sequence is ERCIGVTKPIFHSTKITTKHV. The helical transmembrane segment at 153 to 175 threads the bilayer; sequence KMMLSGVCFFAVFVALLPILGHR. The Extracellular portion of the chain corresponds to 176-198; sequence DYKIQASRTWCFYKTDEIKDWED. A helical transmembrane segment spans residues 199-224; sequence RFYLLLFAFLGLLALGISFVCNAITG. The Cytoplasmic segment spans residues 225-250; the sequence is ISLLKVKFRSQQHRQGRSHHFEMVIQ. Residues 251–267 form a helical membrane-spanning segment; it reads LLGIMCVSCICWSPFLV. At 268 to 285 the chain is on the extracellular side; it reads TMASIGMNIQDFKDSCER. Residues 286–307 form a helical membrane-spanning segment; the sequence is TLFTLRMATWNQILDPWVYILL. Residues 308–362 lie on the Cytoplasmic side of the membrane; that stretch reads RKAVLRNLYVCTRRCCGVHVISLHVWELSSIKDSLKVAAISDLPVTEKVTQQTST.

Belongs to the G-protein coupled receptor 1 family.

It localises to the cell membrane. Functionally, receptor for prostaglandin F2-alpha (PGF2-alpha). The activity of this receptor is mediated by G proteins which activate a phosphatidylinositol-calcium second messenger system. Initiates luteolysis in the corpus luteum. This chain is Prostaglandin F2-alpha receptor (PTGFR), found in Bos taurus (Bovine).